The primary structure comprises 391 residues: Formate-dependent phosphoribosylglycinamide formyltransferase (391 aa).

Residues 20–21 and Glu-80 contribute to the N(1)-(5-phospho-beta-D-ribosyl)glycinamide site; that span reads EL. ATP-binding positions include Arg-112, Lys-153, 158–163, 193–196, and Glu-201; these read SSGKGQ and EGFV. The region spanning 117–306 is the ATP-grasp domain; it reads RLAAEELGLP…EFALHVRAFT (190 aa). Residues Glu-265 and Glu-277 each coordinate Mg(2+). N(1)-(5-phospho-beta-D-ribosyl)glycinamide-binding positions include Asp-284, Lys-354, and 361 to 362; that span reads RR.

This sequence belongs to the PurK/PurT family. In terms of assembly, homodimer.

The enzyme catalyses N(1)-(5-phospho-beta-D-ribosyl)glycinamide + formate + ATP = N(2)-formyl-N(1)-(5-phospho-beta-D-ribosyl)glycinamide + ADP + phosphate + H(+). The protein operates within purine metabolism; IMP biosynthesis via de novo pathway; N(2)-formyl-N(1)-(5-phospho-D-ribosyl)glycinamide from N(1)-(5-phospho-D-ribosyl)glycinamide (formate route): step 1/1. Functionally, involved in the de novo purine biosynthesis. Catalyzes the transfer of formate to 5-phospho-ribosyl-glycinamide (GAR), producing 5-phospho-ribosyl-N-formylglycinamide (FGAR). Formate is provided by PurU via hydrolysis of 10-formyl-tetrahydrofolate. The sequence is that of Formate-dependent phosphoribosylglycinamide formyltransferase from Vibrio cholerae serotype O1 (strain ATCC 39315 / El Tor Inaba N16961).